The chain runs to 548 residues: Chaperonin GroEL (548 aa).

Residues 30 to 33 (TLGP), Lys-51, 87 to 91 (DGTTT), Gly-415, 479 to 481 (NAA), and Asp-495 each bind ATP.

This sequence belongs to the chaperonin (HSP60) family. Forms a cylinder of 14 subunits composed of two heptameric rings stacked back-to-back. Interacts with the co-chaperonin GroES.

It is found in the cytoplasm. It catalyses the reaction ATP + H2O + a folded polypeptide = ADP + phosphate + an unfolded polypeptide.. Together with its co-chaperonin GroES, plays an essential role in assisting protein folding. The GroEL-GroES system forms a nano-cage that allows encapsulation of the non-native substrate proteins and provides a physical environment optimized to promote and accelerate protein folding. This chain is Chaperonin GroEL, found in Pseudomonas fluorescens (strain SBW25).